The sequence spans 51 residues: uncharacterized protein (51 aa).

This is an uncharacterized protein from Bacillus subtilis (strain 168).